Reading from the N-terminus, the 178-residue chain is Germinal center-associated signaling and motility protein (178 aa).

Serine 99 carries the post-translational modification Phosphoserine. At tyrosine 148 the chain carries Phosphotyrosine.

In terms of assembly, interacts with ACTB and MYH2; the interaction with MYH2 is increased by IL6-induced phosphorylation. Interacts (via C-terminus) with ARHGEF11 (via DH domain). Interacts with ARHGEF12. Interacts with SYK; the interaction increases after B-cell receptor stimulation, resulting in enhanced SYK autophosphorylation and activity. In terms of processing, phosphorylation on tyrosine residues can be induced by IL6. Phosphorylation is mediated by LYN. Post-translationally, targeted by the ubiquitin E3 ligase subunit FBXO10 to mediate its ubiquitination and degradation. In terms of tissue distribution, expressed in diffuse large B-cell lymphoma (DLBCL) and several germinal center (GC)-like lymphoma cell lines (at protein level). Highly expressed in normal GC lymphocytes and GC-derived malignancies. Expressed in thymus and spleen.

The protein localises to the cytoplasm. It localises to the cell membrane. Functionally, involved in the negative regulation of lymphocyte motility. It mediates the migration-inhibitory effects of IL6. Serves as a positive regulator of the RhoA signaling pathway. Enhancement of RhoA activation results in inhibition of lymphocyte and lymphoma cell motility by activation of its downstream effector ROCK. Is a regulator of B-cell receptor signaling, that acts through SYK kinase activation. This Homo sapiens (Human) protein is Germinal center-associated signaling and motility protein (GCSAM).